Here is a 274-residue protein sequence, read N- to C-terminus: Large ribosomal subunit protein uL2 (274 aa).

Disordered regions lie at residues glutamate 30 to lysine 54 and valine 223 to glycine 274. Over residues glycine 36–arginine 48 the composition is skewed to low complexity. Basic and acidic residues predominate over residues lysine 263–glycine 274.

It belongs to the universal ribosomal protein uL2 family. In terms of assembly, part of the 50S ribosomal subunit. Forms a bridge to the 30S subunit in the 70S ribosome.

Functionally, one of the primary rRNA binding proteins. Required for association of the 30S and 50S subunits to form the 70S ribosome, for tRNA binding and peptide bond formation. It has been suggested to have peptidyltransferase activity; this is somewhat controversial. Makes several contacts with the 16S rRNA in the 70S ribosome. The sequence is that of Large ribosomal subunit protein uL2 from Wolbachia sp. subsp. Brugia malayi (strain TRS).